The primary structure comprises 161 residues: Putative pre-16S rRNA nuclease (161 aa).

This sequence belongs to the YqgF nuclease family.

The protein localises to the cytoplasm. Its function is as follows. Could be a nuclease involved in processing of the 5'-end of pre-16S rRNA. The sequence is that of Putative pre-16S rRNA nuclease from Bradyrhizobium sp. (strain BTAi1 / ATCC BAA-1182).